A 343-amino-acid polypeptide reads, in one-letter code: Flap endonuclease 1 (343 aa).

The tract at residues 1–98 (MGVPIGELIP…KELEKRREAR (98 aa)) is N-domain. Residues D27, D80, E152, E154, D173, D175, and D236 each contribute to the Mg(2+) site. The tract at residues 116–258 (EARKYAQRAT…KALEIVKYSK (143 aa)) is I-domain. The interval 330–338 (KQSTLESWF) is interaction with PCNA.

Belongs to the XPG/RAD2 endonuclease family. FEN1 subfamily. As to quaternary structure, interacts with PCNA. PCNA stimulates the nuclease activity without altering cleavage specificity. It depends on Mg(2+) as a cofactor.

Functionally, structure-specific nuclease with 5'-flap endonuclease and 5'-3' exonuclease activities involved in DNA replication and repair. During DNA replication, cleaves the 5'-overhanging flap structure that is generated by displacement synthesis when DNA polymerase encounters the 5'-end of a downstream Okazaki fragment. Binds the unpaired 3'-DNA end and kinks the DNA to facilitate 5' cleavage specificity. Cleaves one nucleotide into the double-stranded DNA from the junction in flap DNA, leaving a nick for ligation. Also involved in the base excision repair (BER) pathway. Acts as a genome stabilization factor that prevents flaps from equilibrating into structures that lead to duplications and deletions. Also possesses 5'-3' exonuclease activity on nicked or gapped double-stranded DNA. This Pyrococcus abyssi (strain GE5 / Orsay) protein is Flap endonuclease 1.